Reading from the N-terminus, the 263-residue chain is Type III pantothenate kinase (263 aa).

9 to 16 (DIGNTNVK) lines the ATP pocket. Residues Tyr103 and 110–113 (GADR) contribute to the substrate site. Asp112 functions as the Proton acceptor in the catalytic mechanism. Position 134 (Asp134) interacts with K(+). ATP is bound at residue Thr137. Thr190 provides a ligand contact to substrate.

Belongs to the type III pantothenate kinase family. In terms of assembly, homodimer. The cofactor is NH4(+). It depends on K(+) as a cofactor.

It is found in the cytoplasm. The catalysed reaction is (R)-pantothenate + ATP = (R)-4'-phosphopantothenate + ADP + H(+). It functions in the pathway cofactor biosynthesis; coenzyme A biosynthesis; CoA from (R)-pantothenate: step 1/5. Functionally, catalyzes the phosphorylation of pantothenate (Pan), the first step in CoA biosynthesis. The polypeptide is Type III pantothenate kinase (Oleidesulfovibrio alaskensis (strain ATCC BAA-1058 / DSM 17464 / G20) (Desulfovibrio alaskensis)).